The sequence spans 422 residues: Enolase (422 aa).

Residue glutamine 163 participates in (2R)-2-phosphoglycerate binding. Catalysis depends on glutamate 205, which acts as the Proton donor. Residues aspartate 242, glutamate 283, and aspartate 310 each contribute to the Mg(2+) site. Positions 335, 364, 365, and 386 each coordinate (2R)-2-phosphoglycerate. Lysine 335 acts as the Proton acceptor in catalysis.

The protein belongs to the enolase family. Requires Mg(2+) as cofactor.

It localises to the cytoplasm. Its subcellular location is the secreted. The protein localises to the cell surface. It carries out the reaction (2R)-2-phosphoglycerate = phosphoenolpyruvate + H2O. It functions in the pathway carbohydrate degradation; glycolysis; pyruvate from D-glyceraldehyde 3-phosphate: step 4/5. Catalyzes the reversible conversion of 2-phosphoglycerate (2-PG) into phosphoenolpyruvate (PEP). It is essential for the degradation of carbohydrates via glycolysis. This Bdellovibrio bacteriovorus (strain ATCC 15356 / DSM 50701 / NCIMB 9529 / HD100) protein is Enolase.